The chain runs to 362 residues: S-adenosylmethionine-dependent nucleotide dehydratase RSAD2 (362 aa).

A disordered region spans residues 47–73; the sequence is EQPQVRGEPEDTQETQEDGNSTQPTTP. Over residues 64 to 73 the composition is skewed to polar residues; sequence DGNSTQPTTP. Residues 70-290 form the Radical SAM core domain; the sequence is PTTPVSVNYH…LERHKEVSCL (221 aa). [4Fe-4S] cluster contacts are provided by C84, C88, and C91. Position 198 is an N6-acetyllysine (K198). Residue K207 forms a Glycyl lysine isopeptide (Lys-Gly) (interchain with G-Cter in ubiquitin) linkage.

The protein belongs to the radical SAM superfamily. RSAD2 family. In terms of assembly, homodimer. Interacts with IRAK1 and TRAF6. Interacts with FPPS. Interacts with HADHB. Interacts (via C-terminus) with VAPA/VAP33 (via C-terminus). [4Fe-4S] cluster is required as a cofactor. Acetylated by HAT1. HAT1-mediated acetylation of Lys-198 in turn recruits UBE4A that stimulates RSAD2 polyubiquitination leading to proteasomal degradation. Post-translationally, 'Lys-6'-linked polyubiquitination at Lys-207 leads to RSAD2 protein degradation. As to expression, expressed at higher levels in atherosclerotic arteries than in normal arteries.

It localises to the endoplasmic reticulum membrane. Its subcellular location is the golgi apparatus. It is found in the endoplasmic reticulum. The protein resides in the lipid droplet. The protein localises to the mitochondrion. It localises to the mitochondrion inner membrane. Its subcellular location is the mitochondrion outer membrane. The catalysed reaction is CTP + AH2 + S-adenosyl-L-methionine = 3'-deoxy-3',4'-didehydro-CTP + 5'-deoxyadenosine + L-methionine + A + H2O + H(+). IRAK1 and TRAF6 synergistically activate RSAD2 increasing its activity with CTP as substrate about 10-fold. Its function is as follows. Interferon-inducible antiviral protein which plays a major role in the cell antiviral state induced by type I and type II interferon. Catalyzes the conversion of cytidine triphosphate (CTP) to 3'-deoxy-3',4'-didehydro-CTP (ddhCTP) via a SAM-dependent radical mechanism. In turn, ddhCTP acts as a chain terminator for the RNA-dependent RNA polymerases from multiple viruses and directly inhibits viral replication. Therefore, inhibits a wide range of DNA and RNA viruses. Also promotes TLR7 and TLR9-dependent production of IFN-beta production in plasmacytoid dendritic cells (pDCs) by facilitating 'Lys-63'-linked ubiquitination of IRAK1 by TRAF6. Plays a role in CD4+ T-cells activation and differentiation. Facilitates T-cell receptor (TCR)-mediated GATA3 activation and optimal T-helper 2 (Th2) cytokine production by modulating NFKB1 and JUNB activities. Can inhibit secretion of soluble proteins. The chain is S-adenosylmethionine-dependent nucleotide dehydratase RSAD2 from Mus musculus (Mouse).